Consider the following 240-residue polypeptide: Epoxyqueuosine reductase QueH (240 aa).

[4Fe-4S] cluster contacts are provided by Cys-43, Cys-44, Cys-129, and Cys-132. A disulfide bond links Cys-211 and Cys-213.

This sequence belongs to the QueH family.

The catalysed reaction is epoxyqueuosine(34) in tRNA + AH2 = queuosine(34) in tRNA + A + H2O. It functions in the pathway tRNA modification; tRNA-queuosine biosynthesis. Catalyzes the conversion of epoxyqueuosine (oQ) to queuosine (Q), which is a hypermodified base found in the wobble positions of tRNA(Asp), tRNA(Asn), tRNA(His) and tRNA(Tyr). This chain is Epoxyqueuosine reductase QueH, found in Staphylococcus aureus (strain Mu50 / ATCC 700699).